The following is a 156-amino-acid chain: Small ribosomal subunit protein uS7 (156 aa).

Belongs to the universal ribosomal protein uS7 family. Part of the 30S ribosomal subunit. Contacts proteins S9 and S11.

One of the primary rRNA binding proteins, it binds directly to 16S rRNA where it nucleates assembly of the head domain of the 30S subunit. Is located at the subunit interface close to the decoding center, probably blocks exit of the E-site tRNA. In Myxococcus xanthus (strain DK1622), this protein is Small ribosomal subunit protein uS7.